A 146-amino-acid polypeptide reads, in one-letter code: Hemoglobin subunit beta (146 aa).

N-acetylvaline is present on V1. The 145-residue stretch at 2 to 146 (HLTAEEKNAI…VANALAHKYH (145 aa)) folds into the Globin domain. Position 12 is a phosphothreonine (T12). K59 carries the post-translational modification N6-acetyllysine. H63 contributes to the heme b binding site. K82 carries the N6-acetyllysine modification. H92 serves as a coordination point for heme b. Position 93 is an S-nitrosocysteine (C93). K144 is modified (N6-acetyllysine).

Belongs to the globin family. In terms of assembly, heterotetramer of two alpha chains and two beta chains. As to expression, red blood cells.

Functionally, involved in oxygen transport from the lung to the various peripheral tissues. The polypeptide is Hemoglobin subunit beta (HBB) (Osphranter rufus (Red kangaroo)).